Consider the following 361-residue polypeptide: D-alanine--D-alanine ligase (361 aa).

The ATP-grasp domain occupies Lys-144–Gln-350. Pro-177–Glu-232 lines the ATP pocket. 3 residues coordinate Mg(2+): Asp-303, Glu-317, and Asn-319.

The protein belongs to the D-alanine--D-alanine ligase family. The cofactor is Mg(2+). Requires Mn(2+) as cofactor.

Its subcellular location is the cytoplasm. The enzyme catalyses 2 D-alanine + ATP = D-alanyl-D-alanine + ADP + phosphate + H(+). It participates in cell wall biogenesis; peptidoglycan biosynthesis. Cell wall formation. The sequence is that of D-alanine--D-alanine ligase from Chlorobium phaeovibrioides (strain DSM 265 / 1930) (Prosthecochloris vibrioformis (strain DSM 265)).